Consider the following 463-residue polypeptide: MEEVCSICLEVLVDKEAFTEPCLHYYHNECIKEWTKRANTCPKCRRDYSQIRIGEEVISVKNRSLELHLVDETLEETRERLISYTNLCALCEDPSTSLIYCESCGGSFHFNCIGIGDELDSEWCCPLCGMFQNHLGEASNRNLISATPVGEGRRRVTSIVNTRRTNSIYRSHSNRPAQRAHLMTDSDYTMIVDQHREKLLESQLQESNTQSSGEEESWKLLDEALKSGTQNSQSSEFSTENNVVPLKNTHELGRKLKKPRRASGIKKNVVERSSSHQSTQILKPSSSLISDLLLETRGNSRHPSFTNSTQKLTVEALQSHDPTLKLNIPKTETLSLDQKIVIQKLFIKPRLRNLYDSNTLSKDNYIEINKIICRRLYDKFLQDQLALAYLKQVLEVKERLHGHDLKQFLAQFTHWSELNDFTDDKWQKQETEGSCNHKQTQILSMFDSIIDTMLQNELHKLLT.

The RING-type; atypical zinc finger occupies 5-45; it reads CSICLEVLVDKEAFTEPCLHYYHNECIKEWTKRANTCPKCR. Residues 85 to 131 form a PHD-type zinc finger; that stretch reads TNLCALCEDPSTSLIYCESCGGSFHFNCIGIGDELDSEWCCPLCGMF. Residues 229–242 are compositionally biased toward polar residues; the sequence is TQNSQSSEFSTENN. Residues 229–281 are disordered; that stretch reads TQNSQSSEFSTENNVVPLKNTHELGRKLKKPRRASGIKKNVVERSSSHQSTQI. Residues 255 to 264 show a composition bias toward basic residues; the sequence is KLKKPRRASG.

Interacts with ATG28.

Micropexophagy-specific protein required for efficient micropexophagic apparatus (MIPA) formation but not for general autophagy. This is Autophagy-related protein 36 (ATG35) from Komagataella phaffii (strain GS115 / ATCC 20864) (Yeast).